The primary structure comprises 492 residues: WD repeat-containing protein JIP5 (492 aa).

WD repeat units follow at residues 127 to 166 (RHKG…VVKK), 178 to 217 (KKND…LSNS), 236 to 274 (RSAY…ILIS), 276 to 317 (DQED…LEDQ), and 365 to 405 (RNHN…VEEN). 2 stretches are compositionally biased toward acidic residues: residues 404–414 (ENASVESDSDE) and 422–433 (DLSDDTSSDDET). The tract at residues 404–472 (ENASVESDSD…SKSVKKRKIM (69 aa)) is disordered. Positions 449-462 (KDLKEDHQEEKESN) are enriched in basic and acidic residues.

This sequence belongs to the WD repeat WDR55 family. In terms of assembly, interacts with BRE1, BUD27 and GIS1.

Its subcellular location is the nucleus. The protein localises to the nucleolus. The polypeptide is WD repeat-containing protein JIP5 (JIP5) (Saccharomyces cerevisiae (strain YJM789) (Baker's yeast)).